A 267-amino-acid chain; its full sequence is Thiamine thiazole synthase (267 aa).

NAD(+) is bound by residues Ser41, Glu60–Arg61, Gly68, Val132, and His160–Asp162. Residues Asp162 and His177 each contribute to the Fe cation site. Met227 provides a ligand contact to NAD(+). Arg237 is a binding site for glycine.

The protein belongs to the THI4 family. In terms of assembly, homooctamer; tetramer of dimers. It depends on Fe(2+) as a cofactor.

The enzyme catalyses hydrogen sulfide + glycine + NAD(+) = ADP-5-ethyl-4-methylthiazole-2-carboxylate + nicotinamide + 3 H2O + H(+). The protein operates within cofactor biosynthesis; thiamine diphosphate biosynthesis. Its function is as follows. Involved in the biosynthesis of the thiazole moiety of thiamine. Catalyzes the conversion of NAD and glycine to adenosine diphosphate 5-(2-hydroxyethyl)-4-methylthiazole-2-carboxylate (ADT), an adenylated thiazole intermediate, using free sulfide as a source of sulfur. This chain is Thiamine thiazole synthase, found in Saccharolobus solfataricus (strain ATCC 35092 / DSM 1617 / JCM 11322 / P2) (Sulfolobus solfataricus).